Reading from the N-terminus, the 590-residue chain is Phenylalanine--tRNA ligase beta subunit (590 aa).

A B5 domain is found at 276–382 (MELDVWDVPV…IMYNYDRFEP (107 aa)). Mg(2+)-binding residues include Asn360, Asp366, Glu369, and Asp370.

Belongs to the phenylalanyl-tRNA synthetase beta subunit family. Type 2 subfamily. As to quaternary structure, tetramer of two alpha and two beta subunits. It depends on Mg(2+) as a cofactor.

It is found in the cytoplasm. The catalysed reaction is tRNA(Phe) + L-phenylalanine + ATP = L-phenylalanyl-tRNA(Phe) + AMP + diphosphate + H(+). This chain is Phenylalanine--tRNA ligase beta subunit, found in Methanopyrus kandleri (strain AV19 / DSM 6324 / JCM 9639 / NBRC 100938).